Reading from the N-terminus, the 380-residue chain is MAPNLRKSHPLLKMINNSLIDLPTPSNISAWWNFGSLLGICLATQILTGLLLAMHYTADTTLAFSSVTHTCRNVQYGWLIRNLHANGASFFFICIYLHIGRGLYYGSYLYKETWNTGILLLLTLMATAFVGYVLPWGQMSFWGATVITNLFSAIPYIGQTIVEWAWGGFSVDNPTLTRFFALHFLLPFVIAGLTLIHLTFLHESGSNNPLGLVSNCDKIPFHPYFSLKDILGFMLMFLSLTTLALFSPNLLGDPENFTPANPLVTPPHIKPEWYFLFAYAILRSIPNKLGGVLALAASVLMMFLSPLLHKSKQRTMAFRPLSQLLFWTLVANLFILTWVGSQPVEHPFIIIGQLASFTYFTILLILLPITGALENKMLNY.

4 helical membrane passes run 34-54, 78-99, 114-134, and 179-199; these read FGSL…LLAM, WLIR…YLHI, WNTG…GYVL, and FFAL…IHLT. Residues His-84 and His-98 each coordinate heme b. Heme b-binding residues include His-183 and His-197. His-202 contributes to the a ubiquinone binding site. The next 4 helical transmembrane spans lie at 227 to 247, 289 to 309, 321 to 341, and 348 to 368; these read LKDI…ALFS, LGGV…PLLH, LSQL…WVGS, and FIII…ILLP.

This sequence belongs to the cytochrome b family. In terms of assembly, the cytochrome bc1 complex contains 11 subunits: 3 respiratory subunits (MT-CYB, CYC1 and UQCRFS1), 2 core proteins (UQCRC1 and UQCRC2) and 6 low-molecular weight proteins (UQCRH/QCR6, UQCRB/QCR7, UQCRQ/QCR8, UQCR10/QCR9, UQCR11/QCR10 and a cleavage product of UQCRFS1). This cytochrome bc1 complex then forms a dimer. Heme b is required as a cofactor.

Its subcellular location is the mitochondrion inner membrane. Functionally, component of the ubiquinol-cytochrome c reductase complex (complex III or cytochrome b-c1 complex) that is part of the mitochondrial respiratory chain. The b-c1 complex mediates electron transfer from ubiquinol to cytochrome c. Contributes to the generation of a proton gradient across the mitochondrial membrane that is then used for ATP synthesis. The polypeptide is Cytochrome b (MT-CYB) (Pelagodroma marina (White-faced storm-petrel)).